A 514-amino-acid chain; its full sequence is MSIRDEIKKRRTFAIISHPDAGKTTITEQLLYFGGEIREAGTVKGKKTGNFAKSDWMDIEKQRGISVTSSVMQFDYAGKRVNILDTPGHEDFSEDTYRTLMAVDAAVMVVDSAKGIEAQTKKLFEVVKHRGIPVFTFMNKLDRDGREPLDLLEELEEVLGIASYPMNWPIGMGKAFEGLYDLYNERLELYKGNERFAKIEDGDTLFANNPFYEQTKEDIELLTEAGNEFSEEAILAGELTPVFFGSALTNFGVQTFLDTFLKFAPEPHGHKTVDGDEIDPLNKDFSGFVFKIQANMDPRHRDRIAFVRIVSGEFERGMSVNLTRTGKGAKLSNVTQFMAESRENVENAVAGDIIGVYDTGTYQVGDTLTVGKNKFEFEPLPTFTPELFMKVSAKNVMKQKSFHKGIEQLVQEGAIQLYTNYQTGEYMLGAVGQLQFEVFKHRMENEYNAEVVMTPMGKKTVRWIQPEDLDERMSSSRNILAKDRFDQPVFLFENDFALRWFADKYPDVTLEEKM.

The 261-residue stretch at 8-268 folds into the tr-type G domain; it reads KKRRTFAIIS…TFLKFAPEPH (261 aa). GTP is bound by residues 17-24, 85-89, and 139-142; these read SHPDAGKT, DTPGH, and NKLD.

It belongs to the TRAFAC class translation factor GTPase superfamily. Classic translation factor GTPase family. PrfC subfamily.

It localises to the cytoplasm. Increases the formation of ribosomal termination complexes and stimulates activities of RF-1 and RF-2. It binds guanine nucleotides and has strong preference for UGA stop codons. It may interact directly with the ribosome. The stimulation of RF-1 and RF-2 is significantly reduced by GTP and GDP, but not by GMP. This is Peptide chain release factor 3 from Streptococcus thermophilus (strain CNRZ 1066).